Reading from the N-terminus, the 555-residue chain is Potassium-transporting ATPase potassium-binding subunit (555 aa).

A run of 10 helical transmembrane segments spans residues 2–22, 60–80, 130–150, 173–193, 246–266, 278–298, 374–394, 412–432, 483–503, and 525–545; these read IWVA…PTGI, QYAL…YFIF, IGIT…VMAF, VFLP…VPQT, MSNI…PFTY, ILFV…TTSE, AGFV…GLMV, LIAV…ALAL, LVMF…AASL, and GIFI…MLVL.

Belongs to the KdpA family. As to quaternary structure, the system is composed of three essential subunits: KdpA, KdpB and KdpC.

The protein localises to the cell membrane. In terms of biological role, part of the high-affinity ATP-driven potassium transport (or Kdp) system, which catalyzes the hydrolysis of ATP coupled with the electrogenic transport of potassium into the cytoplasm. This subunit binds the extracellular potassium ions and delivers the ions to the membrane domain of KdpB through an intramembrane tunnel. The protein is Potassium-transporting ATPase potassium-binding subunit of Bacillus cereus (strain ZK / E33L).